The chain runs to 542 residues: Chaperonin GroEL 2 (542 aa).

ATP is bound by residues 30 to 33 (TLGP), lysine 51, 87 to 91 (DGTTT), glycine 415, and aspartate 496.

It belongs to the chaperonin (HSP60) family. As to quaternary structure, forms a cylinder of 14 subunits composed of two heptameric rings stacked back-to-back. Interacts with the co-chaperonin GroES.

It localises to the cytoplasm. The catalysed reaction is ATP + H2O + a folded polypeptide = ADP + phosphate + an unfolded polypeptide.. In terms of biological role, together with its co-chaperonin GroES, plays an essential role in assisting protein folding. The GroEL-GroES system forms a nano-cage that allows encapsulation of the non-native substrate proteins and provides a physical environment optimized to promote and accelerate protein folding. This is Chaperonin GroEL 2 from Mesorhizobium japonicum (strain LMG 29417 / CECT 9101 / MAFF 303099) (Mesorhizobium loti (strain MAFF 303099)).